The sequence spans 269 residues: Glutamate racemase (269 aa).

Substrate is bound by residues aspartate 7–serine 8 and tyrosine 39–glycine 40. Cysteine 70 serves as the catalytic Proton donor/acceptor. Asparagine 71–threonine 72 serves as a coordination point for substrate. Cysteine 194 (proton donor/acceptor) is an active-site residue. Residue threonine 195–histidine 196 coordinates substrate.

It belongs to the aspartate/glutamate racemases family.

It catalyses the reaction L-glutamate = D-glutamate. It participates in cell wall biogenesis; peptidoglycan biosynthesis. Its function is as follows. Provides the (R)-glutamate required for cell wall biosynthesis. The sequence is that of Glutamate racemase from Roseobacter denitrificans (strain ATCC 33942 / OCh 114) (Erythrobacter sp. (strain OCh 114)).